The sequence spans 337 residues: Neurogenic differentiation factor 6 (337 aa).

The interval 43–82 is disordered; it reads LRGKSIKRAPGEETEKEEEEEDREEEDENGLPRRRGLRKK. Residues 54-71 are compositionally biased toward acidic residues; that stretch reads EETEKEEEEEDREEEDEN. The Nuclear localization signal motif lies at 80-86; that stretch reads RKKKTTK. The bHLH domain maps to 94 to 146; it reads FRRQEANARERNRMHGLNDALDNLRKVVPCYSKTQKLSKIETLRLAKNYIWAL.

As to quaternary structure, efficient DNA binding requires dimerization with another bHLH protein.

It is found in the nucleus. Functionally, activates E box-dependent transcription in collaboration with TCF3/E47. May be a trans-acting factor involved in the development and maintenance of the mammalian nervous system. Transactivates the promoter of its own gene. The chain is Neurogenic differentiation factor 6 (NEUROD6) from Bos taurus (Bovine).